Consider the following 504-residue polypeptide: Maturase K (504 aa).

This sequence belongs to the intron maturase 2 family. MatK subfamily.

The protein localises to the plastid. Its subcellular location is the chloroplast. Functionally, usually encoded in the trnK tRNA gene intron. Probably assists in splicing its own and other chloroplast group II introns. In Hamamelis japonica (Japanese witch hazel), this protein is Maturase K.